The sequence spans 627 residues: 1-deoxy-D-xylulose-5-phosphate synthase (627 aa).

Thiamine diphosphate contacts are provided by residues H80 and 121–123; that span reads GHS. D152 is a binding site for Mg(2+). Residues 153–154, N181, Y288, and E370 each bind thiamine diphosphate; that span reads GA. N181 contacts Mg(2+).

It belongs to the transketolase family. DXPS subfamily. In terms of assembly, homodimer. Mg(2+) is required as a cofactor. It depends on thiamine diphosphate as a cofactor.

The enzyme catalyses D-glyceraldehyde 3-phosphate + pyruvate + H(+) = 1-deoxy-D-xylulose 5-phosphate + CO2. Its pathway is metabolic intermediate biosynthesis; 1-deoxy-D-xylulose 5-phosphate biosynthesis; 1-deoxy-D-xylulose 5-phosphate from D-glyceraldehyde 3-phosphate and pyruvate: step 1/1. Its function is as follows. Catalyzes the acyloin condensation reaction between C atoms 2 and 3 of pyruvate and glyceraldehyde 3-phosphate to yield 1-deoxy-D-xylulose-5-phosphate (DXP). The polypeptide is 1-deoxy-D-xylulose-5-phosphate synthase (Vibrio atlanticus (strain LGP32) (Vibrio splendidus (strain Mel32))).